The sequence spans 255 residues: Small ribosomal subunit protein eS1 (255 aa).

A2 is subject to N-acetylalanine; partial.

This sequence belongs to the eukaryotic ribosomal protein eS1 family. Component of the small ribosomal subunit. Mature ribosomes consist of a small (40S) and a large (60S) subunit. The 40S subunit contains about 33 different proteins and 1 molecule of RNA (18S). The 60S subunit contains about 49 different proteins and 3 molecules of RNA (25S, 5.8S and 5S).

Its subcellular location is the cytoplasm. This Yarrowia lipolytica (strain CLIB 122 / E 150) (Yeast) protein is Small ribosomal subunit protein eS1.